We begin with the raw amino-acid sequence, 319 residues long: MTQDYRVLLYYQYVPIEDGESFAQKHLSDCKALGLKGRILVADEGINGTVSGTVEQTNAYMSLMKNDSRFTSTIFKIDEAKQNAFKKMHVRYRPELVNLSLEDDVNPLELTGAYLDPKEFREAMLDENTVVIDARNDYEFDLGHFRGAIRPEIRSFRELPQWIRDNKEQFMEKRVLTYCTGGIRCEKFSGWLVREGFKDVGQLHGGIATYGKDPEVQGDLWDGQMYVFDSRIAVPINQKEHVIVGRDWFDGSPCERYINCGNPECNRQMLASKENEAKYLGACSHECRVHPDNRYIKAHQLSNQEVQERLALLEKDLAS.

The Rhodanese domain maps to 125-219 (LDENTVVIDA…YGKDPEVQGD (95 aa)). The active-site Cysteine persulfide intermediate is the cysteine 179.

Belongs to the TrhO family.

The catalysed reaction is uridine(34) in tRNA + AH2 + O2 = 5-hydroxyuridine(34) in tRNA + A + H2O. In terms of biological role, catalyzes oxygen-dependent 5-hydroxyuridine (ho5U) modification at position 34 in tRNAs. This is tRNA uridine(34) hydroxylase from Lactococcus lactis subsp. cremoris (strain MG1363).